Consider the following 340-residue polypeptide: NADH-quinone oxidoreductase subunit H (340 aa).

9 helical membrane passes run 3–23 (LVGM…LVYM), 69–89 (WAFF…WAVI), 102–122 (VVVM…VLAI), 127–147 (VYGI…LGAI), 154–174 (ISYE…AGSL), 186–206 (MPYW…VSML), 248–268 (ILVS…PLNI), 274–294 (IPGF…FIWV), and 312–332 (KVFL…LLWV).

It belongs to the complex I subunit 1 family. As to quaternary structure, NDH-1 is composed of 14 different subunits. Subunits NuoA, H, J, K, L, M, N constitute the membrane sector of the complex.

The protein localises to the cell inner membrane. The catalysed reaction is a quinone + NADH + 5 H(+)(in) = a quinol + NAD(+) + 4 H(+)(out). Its function is as follows. NDH-1 shuttles electrons from NADH, via FMN and iron-sulfur (Fe-S) centers, to quinones in the respiratory chain. The immediate electron acceptor for the enzyme in this species is believed to be ubiquinone. Couples the redox reaction to proton translocation (for every two electrons transferred, four hydrogen ions are translocated across the cytoplasmic membrane), and thus conserves the redox energy in a proton gradient. This subunit may bind ubiquinone. In Anaplasma phagocytophilum (strain HZ), this protein is NADH-quinone oxidoreductase subunit H.